The chain runs to 103 residues: Small ribosomal subunit protein uS10 (103 aa).

This sequence belongs to the universal ribosomal protein uS10 family. As to quaternary structure, part of the 30S ribosomal subunit.

Involved in the binding of tRNA to the ribosomes. The sequence is that of Small ribosomal subunit protein uS10 from Pseudoalteromonas translucida (strain TAC 125).